A 361-amino-acid chain; its full sequence is Putative agmatine deiminase (361 aa).

The active-site Amidino-cysteine intermediate is Cys354.

Belongs to the agmatine deiminase family.

The enzyme catalyses agmatine + H2O = N-carbamoylputrescine + NH4(+). This chain is Putative agmatine deiminase, found in Streptococcus pneumoniae (strain ATCC 700669 / Spain 23F-1).